The following is a 152-amino-acid chain: Lipoprotein signal peptidase (152 aa).

2 helical membrane passes run 55-75 (NKMW…VFYM) and 85-105 (LGIS…DRVF). Residues Asp-111 and Asp-129 contribute to the active site. Residues 124–144 (VFNIADSALCIGVVLIIIQTL) traverse the membrane as a helical segment.

This sequence belongs to the peptidase A8 family.

The protein resides in the cell membrane. The catalysed reaction is Release of signal peptides from bacterial membrane prolipoproteins. Hydrolyzes -Xaa-Yaa-Zaa-|-(S,diacylglyceryl)Cys-, in which Xaa is hydrophobic (preferably Leu), and Yaa (Ala or Ser) and Zaa (Gly or Ala) have small, neutral side chains.. The protein operates within protein modification; lipoprotein biosynthesis (signal peptide cleavage). Its function is as follows. This protein specifically catalyzes the removal of signal peptides from prolipoproteins. The chain is Lipoprotein signal peptidase from Bacillus cereus (strain ZK / E33L).